The primary structure comprises 466 residues: GTPase Der (466 aa).

2 EngA-type G domains span residues 30–193 and 203–376; these read PVVA…PEVS and RRVA…ASWD. GTP is bound by residues 36–43, 83–87, 145–148, 209–216, 256–260, and 321–324; these read GRPNVGKS, DTGGW, NKVD, GKPNVGKS, DTAGL, and NKWD. A KH-like domain is found at 377-459; the sequence is TRIATGPLNS…PIRINVRVRE (83 aa).

This sequence belongs to the TRAFAC class TrmE-Era-EngA-EngB-Septin-like GTPase superfamily. EngA (Der) GTPase family. In terms of assembly, associates with the 50S ribosomal subunit.

In terms of biological role, GTPase that plays an essential role in the late steps of ribosome biogenesis. In Mycobacterium avium (strain 104), this protein is GTPase Der.